A 295-amino-acid chain; its full sequence is Elongation factor Ts (295 aa).

An involved in Mg(2+) ion dislocation from EF-Tu region spans residues 79 to 82 (TDFV).

Belongs to the EF-Ts family.

Its subcellular location is the cytoplasm. In terms of biological role, associates with the EF-Tu.GDP complex and induces the exchange of GDP to GTP. It remains bound to the aminoacyl-tRNA.EF-Tu.GTP complex up to the GTP hydrolysis stage on the ribosome. This chain is Elongation factor Ts, found in Bacillus mycoides (strain KBAB4) (Bacillus weihenstephanensis).